Here is a 1437-residue protein sequence, read N- to C-terminus: CRISPR-associated endoribonuclease Cas13a (1437 aa).

2 HEPN-like fold regions span residues 460 to 626 and 1101 to 1437; these read LNAS…AMFE and EFRD…QLKN. The disordered stretch occupies residues 1377–1419; that stretch reads EVKEKKKPSDNNTGKGYSKRDRQQDRKEYDKYKEKKKKEGNFL. Residues 1394–1416 show a composition bias toward basic and acidic residues; sequence SKRDRQQDRKEYDKYKEKKKKEG.

Belongs to the CRISPR-associated endoribonuclease Cas13a family. A divalent metal cation serves as cofactor.

Its activity is regulated as follows. Target RNA acts as an activator for non-specific ssRNA degradation. Its function is as follows. CRISPR (clustered regularly interspaced short palindromic repeat), is an adaptive immune system that provides protection against mobile genetic elements (viruses, transposable elements and conjugative plasmids). CRISPR clusters contain sequences complementary to antecedent mobile elements and target invading nucleic acids. Unlike many single-component effectors, this CRISPR-Cas system targets RNA. CRISPR clusters are transcribed from pre-CRISPR RNA (crRNA) and processed into crRNA by this protein. Cleaves linear target ssRNA in a pre-crRNA-dependent fashion, preferentially around A residues. Binding a viable target RNA target activates this protein for non-specific RNA degradation in vitro (called collateral RNA degradation), but it is not very sensitive as it requires nanomolar levels of viable target RNA. This chain is CRISPR-associated endoribonuclease Cas13a, found in Lachnospiraceae bacterium (strain NK4A179).